We begin with the raw amino-acid sequence, 94 residues long: Phosphoribosyl-ATP pyrophosphatase (94 aa).

This sequence belongs to the PRA-PH family.

It localises to the cytoplasm. It catalyses the reaction 1-(5-phospho-beta-D-ribosyl)-ATP + H2O = 1-(5-phospho-beta-D-ribosyl)-5'-AMP + diphosphate + H(+). Its pathway is amino-acid biosynthesis; L-histidine biosynthesis; L-histidine from 5-phospho-alpha-D-ribose 1-diphosphate: step 2/9. This is Phosphoribosyl-ATP pyrophosphatase (hisE) from Sulfurisphaera tokodaii (strain DSM 16993 / JCM 10545 / NBRC 100140 / 7) (Sulfolobus tokodaii).